The chain runs to 720 residues: DNA replication licensing factor mcm7-A (720 aa).

A C4-type zinc finger spans residues 183-210; that stretch reads CDQCGAETYQPIQSPTFMPLIMCPSREC. The region spanning 331 to 537 is the MCM domain; it reads FYEKLAASIA…NDLRLAQHIT (207 aa). ATP is bound by residues Y344, G383, A385, K386, S387, N488, R513, and R603. Residues 512 to 515 carry the Arginine finger motif; that stretch reads SRFD.

It belongs to the MCM family. Component of the mcm2-7 complex (RLF-M). The complex forms a toroidal hexameric ring with the proposed subunit order mcm2-mcm6-mcm4-mcm7-mcm3-mcm5. The heterodimer of mmcm3/mcm5 interacts with mcm4, mmcm6, mcm7 and weakly with mcm2. The N-terminus is required for interaction with mmcm3, though this interaction may not be direct, and remains in a complex with mmcm3 throughout the cell cycle. Begins to associate with zmcm6 at the neurula stage. Component of the replisome complex. Component of the CMG helicase complex, composed of the mcm2-7 complex, the GINS complex and cdc45. Ubiquitinated by traip when forks converge following formation of DNA interstrand cross-links. Ubiquitinated via 'Lys-6'- and 'Lys-63'-linked polyubiquitination by traip. Short ubiquitin chains on mcm7 promote recruitment of DNA glycosylase neil3. If the interstrand cross-link cannot be cleaved by neil3, the ubiquitin chains continue to grow on mcm7, promoting the unloading of the CMG helicase complex by the vcp/p97 ATPase.

It localises to the nucleus. Its subcellular location is the chromosome. The enzyme catalyses ATP + H2O = ADP + phosphate + H(+). Acts as a component of the mcm2-7 complex (mcm complex) which is the putative replicative helicase essential for 'once per cell cycle' DNA replication initiation and elongation in eukaryotic cells. The active ATPase sites in the mcm2-7 ring are formed through the interaction surfaces of two neighboring subunits such that a critical structure of a conserved arginine finger motif is provided in trans relative to the ATP-binding site of the Walker A box of the adjacent subunit. The six ATPase active sites, however, are likely to contribute differentially to the complex helicase activity. The existence of maternal and zygotic forms of mcm3 and mcm6 suggests that specific forms of mcm2-7 complexes may be used during different stages of development. This chain is DNA replication licensing factor mcm7-A (mcm7-a), found in Xenopus laevis (African clawed frog).